Consider the following 177-residue polypeptide: MLDAFSRVVTGADSKAAYVGGADLQALKKFVSEGNKRLDAVNAIVSNASCIVSDAVSGMICENPSLISPSGECYTNRRMAACLRDAEIILRYVSYSLLSGDSSVLEDRCLSGLKETYASLGVPAAGNARAVGIMKATVVAFINNTSNQKKLLTPSGDCSALASEAAGYFDKVTSALA.

Position 18 (Y18) interacts with mesobiliverdin. (2R,3E)-phycocyanobilin is bound by residues K28, N35, and D39. The 15,16-dihydrobiliverdin site is built by C50, D54, and C61. (2R,3E)-phycocyanobilin-binding residues include R77, C82, R84, and D85. Q148 is a 15,16-dihydrobiliverdin binding site. The (2R,3E)-phycocyanobilin site is built by P154, G156, and C158.

Belongs to the phycobiliprotein family. Heterotetramer of 2 different alpha chains and 2 identical beta chains which form 2 alpha-beta heterodimers within the heterotetramer. Post-translationally, contains two phycocyanobilin chromophores, one mesobiliverdin chromophore and one 15,16-dihydrobiliverdin chromophore with binding mediated by both the alpha and beta subunits.

It is found in the plastid. The protein resides in the chloroplast thylakoid membrane. Functionally, light-harvesting photosynthetic tetrapyrrole chromophore-protein from the phycobiliprotein complex. In Chroomonas sp, this protein is Phycocyanin-645 beta chain.